The chain runs to 164 residues: Putative 4-hydroxy-4-methyl-2-oxoglutarate aldolase (164 aa).

Residues 80 to 83 and Arg102 each bind substrate; that span reads GGNL. An a divalent metal cation-binding site is contributed by Asp103.

This sequence belongs to the class II aldolase/RraA-like family. In terms of assembly, homotrimer. The cofactor is a divalent metal cation.

It catalyses the reaction 4-hydroxy-4-methyl-2-oxoglutarate = 2 pyruvate. It carries out the reaction oxaloacetate + H(+) = pyruvate + CO2. In terms of biological role, catalyzes the aldol cleavage of 4-hydroxy-4-methyl-2-oxoglutarate (HMG) into 2 molecules of pyruvate. Also contains a secondary oxaloacetate (OAA) decarboxylase activity due to the common pyruvate enolate transition state formed following C-C bond cleavage in the retro-aldol and decarboxylation reactions. In Burkholderia multivorans (strain ATCC 17616 / 249), this protein is Putative 4-hydroxy-4-methyl-2-oxoglutarate aldolase.